We begin with the raw amino-acid sequence, 75 residues long: Antimicrobial peptide ctriporin (75 aa).

A signal peptide spans M1 to G22. The residue at position 41 (K41) is a Lysine amide. The propeptide occupies E47 to Y75.

Belongs to the non-disulfide-bridged peptide (NDBP) superfamily. Short antimicrobial peptide (group 4) family. Expressed by the venom gland.

It is found in the secreted. Its subcellular location is the target cell membrane. Its function is as follows. Antimicrobial peptide that acts by breaking the cell wall. Is active against Gram-positive bacteria, fungi and antibiotic-resistant pathogens: S.aureus (MIC=5 ug/ml), M.luteus (MIC=5 ug/ml), B.thuringiensis (MIC=10 ug/ml), B.subtilis (MIC=10 ug/ml), C.albicans (MIC=20 ug/ml), methicillin-resistant S.aureus (MIC=5-10 ug/ml), and penicillin-resistant S.epidermidis (MIC=10 ug/ml). Also shows potent activity against antibiotic-sensitive and -resistant Acinetobacter baumannii (MIC=10-20 uM). Shows cytolytic activity against human erythrocytes. In vivo, is efficient in curing staphylococcal skin infection in mice, when externally applied. The chain is Antimicrobial peptide ctriporin from Chaerilus tricostatus (Scorpion).